A 975-amino-acid polypeptide reads, in one-letter code: Cation-chloride cotransporter 1 (975 aa).

Disordered regions lie at residues 1 to 29 (MDSG…SKYR) and 104 to 124 (EQIQ…TQGH). The Cytoplasmic segment spans residues 1 to 132 (MDSGDIEEAG…GHPKPPALKM (132 aa)). Residues 133–153 (GTMMGVFVPCLQNILGIIYYI) form a helical membrane-spanning segment. The Extracellular segment spans residues 154–167 (RFTWIVGMAGIGQG). A helical transmembrane segment spans residues 168–188 (LVLVFLCGLCTFLTTISLSAI). Residues 189-214 (ATNGAMKGGGPYYLIGRALGPEVGIS) lie on the Cytoplasmic side of the membrane. A helical transmembrane segment spans residues 215–235 (IGLCFFLGNAVAGALYVLGAV). At 236 to 273 (ETFLKAFPAAGIFRETITKVNGTAVSESIQSPNSHDLQ) the chain is on the extracellular side. An N-linked (GlcNAc...) asparagine glycan is attached at Asn256. Residues 274–294 (VYGIVVTILLCFIVFGGVKMI) traverse the membrane as a helical segment. At 295–296 (NR) the chain is on the cytoplasmic side. The helical transmembrane segment at 297–317 (VAPAFLVPVLLSIFCIFIGIF) threads the bilayer. Topologically, residues 318–359 (LAKTDDPDNGITGLRLKSFKDNWGSAYQMTNDAGIPDPTGGT) are extracellular. A helical transmembrane segment spans residues 360-380 (YWSFNELVGLFFPAVTGIMAG). Residues 381–398 (SNRSASLKDTQKSIPVGT) lie on the Cytoplasmic side of the membrane. Residues 399-419 (LAATLTTTSLYLISVLFFGAV) traverse the membrane as a helical segment. Topologically, residues 420–434 (ATRDKLLTDRLLTAT) are extracellular. Residues 435 to 455 (IAWPFPAIVHVGIILSTLGAA) form a helical membrane-spanning segment. Residues 456–490 (LQSLTGAPRLLAAIANDDILPILNYFKVADTSEPH) lie on the Cytoplasmic side of the membrane. Residues 491–511 (IATLFTAFICIGCVVIGNLDL) traverse the membrane as a helical segment. Residues 512–515 (ITPT) are Extracellular-facing. Residues 516–536 (VTMFYLLCYSGVNLSCFLLDL) traverse the membrane as a helical segment. The Cytoplasmic segment spans residues 537-544 (LDAPSWRP). Residues 545-565 (RWKYHHWSLSFVGASLCIVIM) form a helical membrane-spanning segment. Residues 566-571 (FLISWS) lie on the Extracellular side of the membrane. Residues 572–592 (FTVVAIALASLIYKYVGLKGK) traverse the membrane as a helical segment. Over 593–975 (AGDWGDGFKS…YHRDVVTLFT (383 aa)) the chain is Cytoplasmic.

This sequence belongs to the SLC12A transporter family. Expressed in young seedlings cotyledon tips, plant vasculature, root tips and axillary buds. Expressed in root vascular strand in the pericycle and other parenchyma cells bordering xylem vessels. Expressed in the xylem/symplast boundaries of rosette stems, rosette leaves and cauline leaves. Expressed in stipules, trichomes and hydathodes. Expressed in pollen grains.

Its subcellular location is the membrane. Its function is as follows. Cation/chloride cotransporter that mediates potassium-chloride and sodium-chloride cotransports. Involved in plant development and Cl(-) homeostasis. May be involved in long distance Cl(-) transport. Does not function as an H(+)-dependent cotransporter. The polypeptide is Cation-chloride cotransporter 1 (CCC1) (Arabidopsis thaliana (Mouse-ear cress)).